Here is a 305-residue protein sequence, read N- to C-terminus: Putative ABC transporter molybdenum-binding protein HVO_B0369 (305 aa).

A signal peptide (tat-type signal) is located at residues 1–40 (MNPDSAAGRSSRRAFLAAVGGVAAGGLTATAGCLGRGEEA).

This sequence belongs to the bacterial solute-binding protein 1 family. WtpA subfamily. The complex is composed of two ATP-binding proteins, two transmembrane proteins (HVO_B0370) and a solute-binding protein (HVO_B0369). Predicted to be exported by the Tat system. The position of the signal peptide cleavage has not been experimentally proven.

Its function is as follows. Part of an ABC transporter complex involved in molybdenum import. This is Putative ABC transporter molybdenum-binding protein HVO_B0369 from Haloferax volcanii (strain ATCC 29605 / DSM 3757 / JCM 8879 / NBRC 14742 / NCIMB 2012 / VKM B-1768 / DS2) (Halobacterium volcanii).